The sequence spans 688 residues: Eukaryotic translation initiation factor 3 subunit B (688 aa).

The interval 1-43 (MLESERPERDMEEEGEESNEEEEEEGMSFSDPEGFEDDISDEE) is disordered. Acidic residues-rich tracts occupy residues 10–26 (DMEE…EEEG) and 33–43 (EGFEDDISDEE). In terms of domain architecture, RRM spans 61–144 (SVIVVDNVPQ…HTFRVNLFTD (84 aa)). 8 WD repeats span residues 164–206 (KDFG…VPVE), 208–246 (RARW…QIQR), 248–293 (SHQG…NKRG), 297–335 (ESSA…LLDK), 338–373 (LKIT…TLMQ), 436–492 (EMKD…TIFW), 525–570 (AEHY…LQKN), and 635–680 (TYRE…FFVT). Residues 589-640 (SQDQIKQIKKDLKKYSKIFEQKDRLSQTKASKELIERRRAMMEEYKTYREMA) are a coiled coil.

Belongs to the eIF-3 subunit B family. As to quaternary structure, component of the eukaryotic translation initiation factor 3 (eIF-3) complex, which is composed of 13 subunits: eif3a, eif3b, eif3c, eif3d, eif3e, eif3f, eif3g, eif3h, eif3i, eif3j, eif3k, eif3l and eif3m.

The protein localises to the cytoplasm. It is found in the stress granule. Its function is as follows. RNA-binding component of the eukaryotic translation initiation factor 3 (eIF-3) complex, which is involved in protein synthesis of a specialized repertoire of mRNAs and, together with other initiation factors, stimulates binding of mRNA and methionyl-tRNAi to the 40S ribosome. The eIF-3 complex specifically targets and initiates translation of a subset of mRNAs involved in cell proliferation. This is Eukaryotic translation initiation factor 3 subunit B (eif3b) from Xenopus laevis (African clawed frog).